The sequence spans 363 residues: Galactokinase (363 aa).

16–19 (EHTD) lines the substrate pocket. ATP contacts are provided by residues serine 50 and 103–109 (GSGLSSS). Positions 109 and 141 each coordinate Mg(2+). Aspartate 153 serves as the catalytic Proton acceptor. Residue tyrosine 205 coordinates substrate.

This sequence belongs to the GHMP kinase family. GalK subfamily.

It localises to the cytoplasm. The catalysed reaction is alpha-D-galactose + ATP = alpha-D-galactose 1-phosphate + ADP + H(+). The protein operates within carbohydrate metabolism; galactose metabolism. Functionally, catalyzes the transfer of the gamma-phosphate of ATP to D-galactose to form alpha-D-galactose-1-phosphate (Gal-1-P). The protein is Galactokinase of Mycobacterium bovis (strain ATCC BAA-935 / AF2122/97).